A 440-amino-acid chain; its full sequence is Light-independent protochlorophyllide reductase subunit N (440 aa).

[4Fe-4S] cluster-binding residues include C15, C40, and C99.

The protein belongs to the BchN/ChlN family. As to quaternary structure, protochlorophyllide reductase is composed of three subunits; BchL, BchN and BchB. Forms a heterotetramer of two BchB and two BchN subunits. [4Fe-4S] cluster is required as a cofactor.

It catalyses the reaction chlorophyllide a + oxidized 2[4Fe-4S]-[ferredoxin] + 2 ADP + 2 phosphate = protochlorophyllide a + reduced 2[4Fe-4S]-[ferredoxin] + 2 ATP + 2 H2O. It participates in porphyrin-containing compound metabolism; bacteriochlorophyll biosynthesis (light-independent). Functionally, component of the dark-operative protochlorophyllide reductase (DPOR) that uses Mg-ATP and reduced ferredoxin to reduce ring D of protochlorophyllide (Pchlide) to form chlorophyllide a (Chlide). This reaction is light-independent. The NB-protein (BchN-BchB) is the catalytic component of the complex. The sequence is that of Light-independent protochlorophyllide reductase subunit N from Heliobacterium mobile (Heliobacillus mobilis).